A 478-amino-acid polypeptide reads, in one-letter code: Proline--tRNA ligase (478 aa).

Belongs to the class-II aminoacyl-tRNA synthetase family. ProS type 3 subfamily. In terms of assembly, homodimer.

Its subcellular location is the cytoplasm. The enzyme catalyses tRNA(Pro) + L-proline + ATP = L-prolyl-tRNA(Pro) + AMP + diphosphate. Its function is as follows. Catalyzes the attachment of proline to tRNA(Pro) in a two-step reaction: proline is first activated by ATP to form Pro-AMP and then transferred to the acceptor end of tRNA(Pro). The sequence is that of Proline--tRNA ligase from Ignicoccus hospitalis (strain KIN4/I / DSM 18386 / JCM 14125).